The chain runs to 525 residues: Putative EGF-like domain-containing protein R659 (525 aa).

An N-terminal signal peptide occupies residues methionine 1–glycine 24. N-linked (GlcNAc...) asparagine; by host glycans are attached at residues asparagine 60, asparagine 77, asparagine 171, asparagine 181, asparagine 268, and asparagine 281. Residues leucine 317–serine 359 form the EGF-like domain. Disulfide bonds link cysteine 321/cysteine 330, cysteine 324/cysteine 345, and cysteine 347/cysteine 358. Asparagine 354 and asparagine 411 each carry an N-linked (GlcNAc...) asparagine; by host glycan.

It is found in the secreted. This chain is Putative EGF-like domain-containing protein R659, found in Acanthamoeba polyphaga (Amoeba).